The following is a 533-amino-acid chain: DNA-directed RNA polymerase III subunit RPC3 (533 aa).

The disordered stretch occupies residues 162-181; the sequence is LVPDTDSSDRGPPPPAPTLV. Phosphoserine is present on serine 194. Residues 197-228 are disordered; sequence GKGKRRRSSDEDATGEPKAKKPRYTDNKEPSP. Over residues 211–227 the composition is skewed to basic and acidic residues; that stretch reads GEPKAKKPRYTDNKEPS.

This sequence belongs to the eukaryotic RPC3/POLR3C RNA polymerase subunit family. As to quaternary structure, component of the RNA polymerase III complex consisting of 17 subunits: a ten-subunit horseshoe-shaped catalytic core composed of POLR3A/RPC1, POLR3B/RPC2, POLR1C/RPAC1, POLR1D/RPAC2, POLR3K/RPC10, POLR2E/RPABC1, POLR2F/RPABC2, POLR2H/RPABC3, POLR2K/RPABC4 and POLR2L/RPABC5; a mobile stalk composed of two subunits POLR3H/RPC8 and CRCP/RPC9, protruding from the core and functioning primarily in transcription initiation; and additional subunits homologous to general transcription factors of the RNA polymerase II machinery, POLR3C/RPC3-POLR3F/RPC6-POLR3G/RPC7 heterotrimer required for transcription initiation and POLR3D/RPC4-POLR3E/RPC5 heterodimer involved in both transcription initiation and termination. Directly interacts with POLR3G/RPC7 and POLR3GL. Directly interacts with POLR3F/RPC6. Interacts with GTF3C4. As part of the RNA polymerase III complex, interacts with PKP2.

Its subcellular location is the nucleus. In terms of biological role, DNA-dependent RNA polymerase catalyzes the transcription of DNA into RNA using the four ribonucleoside triphosphates as substrates. Specific peripheric component of RNA polymerase III (Pol III) which synthesizes small non-coding RNAs including 5S rRNA, snRNAs, tRNAs and miRNAs from at least 500 distinct genomic loci. Part of POLR3C/RPC3-POLR3F/RPC6-POLR3G/RPC7 heterotrimer, coordinates the dynamics of Pol III stalk and clamp modules during the transition from apo to elongation state. Pol III plays a key role in sensing and limiting infection by intracellular bacteria and DNA viruses. Acts as a nuclear and cytosolic DNA sensor involved in innate immune response. Can sense non-self dsDNA that serves as template for transcription into dsRNA. The non-self RNA polymerase III transcripts, such as Epstein-Barr virus-encoded RNAs (EBERs) induce type I interferon and NF-kappa-B through the RIG-I pathway. Preferentially binds single-stranded DNA (ssDNA) in a sequence-independent manner. This Mus musculus (Mouse) protein is DNA-directed RNA polymerase III subunit RPC3.